The sequence spans 326 residues: Acyl-CoA-binding domain-containing protein 4 (326 aa).

The region spanning 10 to 99 (CQKQFQAAVS…MKLVAQKVID (90 aa)) is the ACB domain. Residues 21–30 (IQNLPKNGSY), 41–45 (YSYYK), K67, and Y86 each bind an acyl-CoA. 2 disordered regions span residues 147-170 (VQAA…SRLP) and 223-248 (KEAA…SLMG). At S164 the chain carries Phosphoserine.

Binds medium- and long-chain acyl-CoA esters and may function as an intracellular carrier of acyl-CoA esters. The sequence is that of Acyl-CoA-binding domain-containing protein 4 (Acbd4) from Rattus norvegicus (Rat).